A 66-amino-acid chain; its full sequence is Opicalcin-1 (66 aa).

Residues 1 to 22 (MKPSLIIVTFIVVFMAISCVAA) form the signal peptide. Positions 23 to 31 (DDEQETWIE) are excised as a propeptide. 3 cysteine pairs are disulfide-bonded: cysteine 36–cysteine 50, cysteine 43–cysteine 54, and cysteine 49–cysteine 65. The segment at 55–57 (KRR) is essential for stimulation of [3H]ryanodine binding to RYR1.

This sequence belongs to the scorpion calcin family. Expressed by the venom gland.

The protein localises to the secreted. This toxin stabilizes ryanodine receptor 1 (RyR1) opening in a long-lasting subconductance state (35% of the full conductance state). Furthermore, it triggers calcium release from sarcoplasmic vesicles (2 nM are enough to induce a sharp release, and 67% of the total calcium is released after toxin (100 nM) addition) probably by acting as a cell-penetrating peptide (CPP). In addition, it has been shown to dose-dependently stimulate ryanodine binding to RyR1 (EC(50)=0.3 nM). It also augments the bell-shaped calcium-[3H]ryanodine binding curve that is maximal at about 10 uM calcium concentration. It binds a different site as ryanodine. It acts synergistically with caffeine. In vivo, intracerebroventricular injection into mice induces neurotoxic symptoms, followed by death. This Opistophthalmus carinatus (African yellow leg scorpion) protein is Opicalcin-1.